The sequence spans 224 residues: Casparian strip membrane protein 1 (224 aa).

The tract at residues 1-22 (MSSGEPAAVSIPIHDHHGKAPA) is disordered. Topologically, residues 1-62 (MSSGEPAAVS…RGDHHRGSRC (62 aa)) are cytoplasmic. A helical transmembrane segment spans residues 63–83 (LAFLDFILRIAAFGPALAAAI). The Extracellular segment spans residues 84-110 (STGTSDETLSVFTEFYQFRARFDDFPA). The helical transmembrane segment at 111-131 (FLFFLVANAIVAGYLVLSLPF) threads the bilayer. Topologically, residues 132 to 145 (SAVLVIRPQTIGLR) are cytoplasmic. Residues 146–166 (LLLLVCDMIMAAMLTAAASAA) traverse the membrane as a helical segment. Residues 167–200 (AAIVDLAHNGNLRANWVAICMQFHGFCQRTSGSV) are Extracellular-facing. A helical transmembrane segment spans residues 201–221 (VASFLTVVILMFLVILAACSI). Over 222–224 (RKR) the chain is Cytoplasmic.

The protein belongs to the Casparian strip membrane proteins (CASP) family. In terms of assembly, homodimer and heterodimers.

It localises to the cell membrane. Regulates membrane-cell wall junctions and localized cell wall deposition. Required for establishment of the Casparian strip membrane domain (CSD) and the subsequent formation of Casparian strips, a cell wall modification of the root endodermis that determines an apoplastic barrier between the intraorganismal apoplasm and the extraorganismal apoplasm and prevents lateral diffusion. The polypeptide is Casparian strip membrane protein 1 (Oryza sativa subsp. indica (Rice)).